A 320-amino-acid polypeptide reads, in one-letter code: Thioredoxin reductase (320 aa).

Thr-36–Gln-43 lines the FAD pocket. Cys-136 and Cys-139 are joined by a disulfide. Asp-287 to Ala-296 contributes to the FAD binding site.

This sequence belongs to the class-II pyridine nucleotide-disulfide oxidoreductase family. Homodimer. It depends on FAD as a cofactor.

It localises to the cytoplasm. The catalysed reaction is [thioredoxin]-dithiol + NADP(+) = [thioredoxin]-disulfide + NADPH + H(+). The sequence is that of Thioredoxin reductase (trxB) from Coxiella burnetii (strain RSA 493 / Nine Mile phase I).